The chain runs to 235 residues: Ribonuclease P protein component 3 (235 aa).

The protein belongs to the eukaryotic/archaeal RNase P protein component 3 family. As to quaternary structure, consists of a catalytic RNA component and at least 4-5 protein subunits.

The protein resides in the cytoplasm. It carries out the reaction Endonucleolytic cleavage of RNA, removing 5'-extranucleotides from tRNA precursor.. Functionally, part of ribonuclease P, a protein complex that generates mature tRNA molecules by cleaving their 5'-ends. The chain is Ribonuclease P protein component 3 from Haloarcula marismortui (strain ATCC 43049 / DSM 3752 / JCM 8966 / VKM B-1809) (Halobacterium marismortui).